The following is a 187-amino-acid chain: CASP-like protein 2 (187 aa).

The Cytoplasmic portion of the chain corresponds to 1–24 (MKVSAVETGEISQVSAPRKGMIRG). The helical transmembrane segment at 25–45 (LSIMDFILRIVAAIGTLGSAL) threads the bilayer. The Extracellular portion of the chain corresponds to 46 to 72 (STGTTRETLPFTTQFVKFRAVFDDLPT). A helical transmembrane segment spans residues 73 to 93 (FVFFVTSNSIVCGYLVLSLAL). Over 94–108 (SFFHIIRRSSAAKSR) the chain is Cytoplasmic. Residues 109–129 (ILLVFLDTVMFGLLTTGAAAA) form a helical membrane-spanning segment. The Extracellular portion of the chain corresponds to 130–163 (GTIVYVSHYGNVNANWFPFCGQYNHFCERISGSL). A helical membrane pass occupies residues 164–184 (IGSFIAVVIFMIIILMSAVSI). Residues 185-187 (SKH) are Cytoplasmic-facing.

This sequence belongs to the Casparian strip membrane proteins (CASP) family. In terms of assembly, homodimer and heterodimers.

The protein resides in the cell membrane. The polypeptide is CASP-like protein 2 (Lotus japonicus (Lotus corniculatus var. japonicus)).